Here is a 275-residue protein sequence, read N- to C-terminus: 3-methyl-2-oxobutanoate hydroxymethyltransferase (275 aa).

Positions 51 and 90 each coordinate Mg(2+). 3-methyl-2-oxobutanoate is bound by residues 51–52 (DS), Asp90, and Lys120. Position 122 (Glu122) interacts with Mg(2+). The Proton acceptor role is filled by Glu189.

The protein belongs to the PanB family. Homodecamer; pentamer of dimers. Requires Mg(2+) as cofactor.

Its subcellular location is the cytoplasm. It carries out the reaction 3-methyl-2-oxobutanoate + (6R)-5,10-methylene-5,6,7,8-tetrahydrofolate + H2O = 2-dehydropantoate + (6S)-5,6,7,8-tetrahydrofolate. It functions in the pathway cofactor biosynthesis; (R)-pantothenate biosynthesis; (R)-pantoate from 3-methyl-2-oxobutanoate: step 1/2. Functionally, catalyzes the reversible reaction in which hydroxymethyl group from 5,10-methylenetetrahydrofolate is transferred onto alpha-ketoisovalerate to form ketopantoate. This Caulobacter vibrioides (strain ATCC 19089 / CIP 103742 / CB 15) (Caulobacter crescentus) protein is 3-methyl-2-oxobutanoate hydroxymethyltransferase.